Consider the following 325-residue polypeptide: MSYQQRANDSMNSAKQYSSSAGAVHNSDEPFSSSGAPQNRNFDTSYTSEIPSNSSRAANDMGTDIGSGDPYAGMTSDTKKGFNSVESRKKEQSDVRGGDTSYSRRHDDSSYSSNKYSTGGNDSYSSGGRNEDYSTSGGSYTTDPSRTDDTASYGQSQYNQSRKTTQGGDYGEDYSQSYPTDTYGSRQKATPSDTVGGGAYDYSSSGSHTHGGSHGTEHRGGSYGNDNTANKTRGAVSSAGYSGEGYGKGTYATDTTAEANRRAATGTRNARTTAQRNAQLAEDEHVSMGDKMKGNMEKMAGKLTRDPELVQKGEDLKTGHHSERY.

Polar residues-rich tracts occupy residues 1–21 and 29–57; these read MSYQQRANDSMNSAKQYSSSA and EPFSSSGAPQNRNFDTSYTSEIPSNSSRA. The segment at 1–325 is disordered; sequence MSYQQRANDS…LKTGHHSERY (325 aa). Basic and acidic residues predominate over residues 86–109; it reads ESRKKEQSDVRGGDTSYSRRHDDS. Polar residues-rich tracts occupy residues 114 to 167 and 174 to 193; these read NKYS…TTQG and YSQSYPTDTYGSRQKATPSD. Low complexity-rich tracts occupy residues 200-210 and 252-278; these read YDYSSSGSHTH and ATDTTAEANRRAATGTRNARTTAQRNA. Residues 282–325 are compositionally biased toward basic and acidic residues; sequence EDEHVSMGDKMKGNMEKMAGKLTRDPELVQKGEDLKTGHHSERY.

This is an uncharacterized protein from Schizosaccharomyces pombe (strain 972 / ATCC 24843) (Fission yeast).